The primary structure comprises 508 residues: Photosystem II CP47 reaction center protein (508 aa).

6 helical membrane-spanning segments follow: residues 21–36, 101–115, 140–156, 203–218, 237–252, and 457–472; these read AVHI…WAGS, IVFS…IWHW, GIHL…FGAF, IAAG…FHLS, VLSS…AFIV, and TFAL…HGAR.

It belongs to the PsbB/PsbC family. PsbB subfamily. In terms of assembly, PSII is composed of 1 copy each of membrane proteins PsbA, PsbB, PsbC, PsbD, PsbE, PsbF, PsbH, PsbI, PsbJ, PsbK, PsbL, PsbM, PsbT, PsbX, PsbY, PsbZ, Psb30/Ycf12, at least 3 peripheral proteins of the oxygen-evolving complex and a large number of cofactors. It forms dimeric complexes. Binds multiple chlorophylls. PSII binds additional chlorophylls, carotenoids and specific lipids. serves as cofactor.

Its subcellular location is the plastid. The protein resides in the chloroplast thylakoid membrane. One of the components of the core complex of photosystem II (PSII). It binds chlorophyll and helps catalyze the primary light-induced photochemical processes of PSII. PSII is a light-driven water:plastoquinone oxidoreductase, using light energy to abstract electrons from H(2)O, generating O(2) and a proton gradient subsequently used for ATP formation. The polypeptide is Photosystem II CP47 reaction center protein (Gnetum parvifolium (Small-leaved jointfir)).